Reading from the N-terminus, the 468-residue chain is Mitochondrial distribution and morphology protein 10 (468 aa).

Belongs to the MDM10 family. As to quaternary structure, component of the ER-mitochondria encounter structure (ERMES) or MDM complex, composed of MMM1, MDM10, MDM12 and MDM34. Associates with the mitochondrial outer membrane sorting assembly machinery SAM(core) complex.

The protein localises to the mitochondrion outer membrane. Functionally, component of the ERMES/MDM complex, which serves as a molecular tether to connect the endoplasmic reticulum and mitochondria. Components of this complex are involved in the control of mitochondrial shape and protein biogenesis and may function in phospholipid exchange. MDM10 is involved in the late assembly steps of the general translocase of the mitochondrial outer membrane (TOM complex). Functions in the TOM40-specific route of the assembly of outer membrane beta-barrel proteins, including the association of TOM40 with the receptor TOM22 and small TOM proteins. Can associate with the SAM(core) complex as well as the MDM12-MMM1 complex, both involved in late steps of the major beta-barrel assembly pathway, that is responsible for biogenesis of all outer membrane beta-barrel proteins. May act as a switch that shuttles between both complexes and channels precursor proteins into the TOM40-specific pathway. Plays a role in mitochondrial morphology and in the inheritance of mitochondria. The polypeptide is Mitochondrial distribution and morphology protein 10 (Blastomyces gilchristii (strain SLH14081) (Blastomyces dermatitidis)).